The chain runs to 201 residues: MEYLIGIQGPDYVLVASDRVAASNIVQMKDDHDKMFKMSEKILLLCVGEAGDTVQFAEYIQKNVQLYKMRNGYELSPTAAANFTRRNLADCLRSRTPYHVNLLLAGYDEHEGPALYYMDYLAALAKAPFAAHGYGAFLTLSILDRYYTPTISRERAVELLRKCLEELQKRFILNLPTFSVRIIDKNGIHDLDNISFPKQGS.

N-acetylmethionine is present on methionine 1.

It belongs to the peptidase T1B family. As to quaternary structure, the 26S proteasome consists of a 20S proteasome core and two 19S regulatory subunits. The 20S proteasome core is a barrel-shaped complex made of 28 subunits that are arranged in four stacked rings. The two outer rings are each formed by seven alpha subunits, and the two inner rings are formed by seven beta subunits. The proteolytic activity is exerted by three beta-subunits PSMB5, PSMB6 and PSMB7. (Microbial infection) Interacts with HIV-1 protein Tat.

The protein localises to the cytoplasm. It is found in the nucleus. Its function is as follows. Non-catalytic component of the 20S core proteasome complex involved in the proteolytic degradation of most intracellular proteins. This complex plays numerous essential roles within the cell by associating with different regulatory particles. Associated with two 19S regulatory particles, forms the 26S proteasome and thus participates in the ATP-dependent degradation of ubiquitinated proteins. The 26S proteasome plays a key role in the maintenance of protein homeostasis by removing misfolded or damaged proteins that could impair cellular functions, and by removing proteins whose functions are no longer required. Associated with the PA200 or PA28, the 20S proteasome mediates ubiquitin-independent protein degradation. This type of proteolysis is required in several pathways including spermatogenesis (20S-PA200 complex) or generation of a subset of MHC class I-presented antigenic peptides (20S-PA28 complex). This Homo sapiens (Human) protein is Proteasome subunit beta type-2.